The primary structure comprises 165 residues: Growth arrest and DNA damage-inducible protein GADD45 alpha (165 aa).

Thr2 carries the post-translational modification Phosphothreonine.

The protein belongs to the GADD45 family. As to quaternary structure, interacts with AURKA, PCNA, GADD45GIP1 and MAPK14.

The protein localises to the nucleus. In terms of biological role, might affect PCNA interaction with some CDK (cell division protein kinase) complexes; stimulates DNA excision repair in vitro and inhibits entry of cells into S phase. In T-cells, functions as a regulator of p38 MAPKs by inhibiting p88 phosphorylation and activity. The protein is Growth arrest and DNA damage-inducible protein GADD45 alpha (GADD45A) of Bos taurus (Bovine).